Reading from the N-terminus, the 265-residue chain is uncharacterized protein (265 aa).

An N-terminal signal peptide occupies residues 1–22 (MGYFKRVLLYIIVMVLSVFIIG). Residue Cys-23 is the site of N-palmitoyl cysteine attachment. Cys-23 carries S-diacylglycerol cysteine lipidation.

This sequence belongs to the staphylococcal tandem lipoprotein family.

It localises to the cell membrane. This is an uncharacterized protein from Staphylococcus aureus (strain MSSA476).